A 226-amino-acid chain; its full sequence is 7-cyano-7-deazaguanine synthase (226 aa).

10-20 (LSGGLDSATAA) is a binding site for ATP. The Zn(2+) site is built by C191, C199, C202, and C205.

This sequence belongs to the QueC family. The cofactor is Zn(2+).

It carries out the reaction 7-carboxy-7-deazaguanine + NH4(+) + ATP = 7-cyano-7-deazaguanine + ADP + phosphate + H2O + H(+). The protein operates within purine metabolism; 7-cyano-7-deazaguanine biosynthesis. Functionally, catalyzes the ATP-dependent conversion of 7-carboxy-7-deazaguanine (CDG) to 7-cyano-7-deazaguanine (preQ(0)). This is 7-cyano-7-deazaguanine synthase from Prochlorococcus marinus (strain MIT 9303).